Here is a 95-residue protein sequence, read N- to C-terminus: Parvalbumin alpha (95 aa).

Position 19 is a phosphoserine (S19). EF-hand domains are found at residues 34–69 (KNREEVKMVFQILDKDKSGFIEEEELKFILKGFSAD) and 73–95 (LSDTETKRMMAAGDKDGDGKIGA). 10 residues coordinate Ca(2+): D47, D49, S51, F53, E55, E58, D86, D88, D90, and K92.

The protein belongs to the parvalbumin family.

Functionally, in muscle, parvalbumin is thought to be involved in relaxation after contraction. It binds two calcium ions. The protein is Parvalbumin alpha (PVALB) of Cavia porcellus (Guinea pig).